A 33-amino-acid polypeptide reads, in one-letter code: Dermaseptin-H9 (33 aa).

Leu33 is modified (leucine amide).

Belongs to the frog skin active peptide (FSAP) family. Dermaseptin subfamily. As to expression, expressed by the skin glands.

The protein resides in the secreted. In terms of biological role, has antimicrobial activity. The sequence is that of Dermaseptin-H9 from Pithecopus hypochondrialis (Orange-legged leaf frog).